Reading from the N-terminus, the 971-residue chain is Exportin-2 (971 aa).

Methionine 1 bears the N-acetylmethionine mark. One can recognise an Importin N-terminal domain in the interval 29-102 (AEKFLESVEG…KANIVHLMLS (74 aa)). A Phosphoserine modification is found at serine 112. 2 positions are modified to N6-acetyllysine: lysine 574 and lysine 824. The residue at position 931 (serine 931) is a Phosphoserine.

It belongs to the XPO2/CSE1 family. In terms of assembly, found in a complex with CSE1L/XPO2, Ran and KPNA2. Binds with high affinity to importin-alpha only in the presence of RanGTP. The complex is dissociated by the combined action of RanBP1 and RanGAP1. Interacts with CFTR. As to expression, detected in brain, placenta, ovary, testis and trachea (at protein level). Widely expressed. Highly expressed in testis and in proliferating cells.

Its subcellular location is the cytoplasm. It localises to the nucleus. Its function is as follows. Export receptor for importin-alpha. Mediates importin-alpha re-export from the nucleus to the cytoplasm after import substrates (cargos) have been released into the nucleoplasm. In the nucleus binds cooperatively to importin-alpha and to the GTPase Ran in its active GTP-bound form. Docking of this trimeric complex to the nuclear pore complex (NPC) is mediated through binding to nucleoporins. Upon transit of a nuclear export complex into the cytoplasm, disassembling of the complex and hydrolysis of Ran-GTP to Ran-GDP (induced by RANBP1 and RANGAP1, respectively) cause release of the importin-alpha from the export receptor. CSE1L/XPO2 then return to the nuclear compartment and mediate another round of transport. The directionality of nuclear export is thought to be conferred by an asymmetric distribution of the GTP- and GDP-bound forms of Ran between the cytoplasm and nucleus. The polypeptide is Exportin-2 (CSE1L) (Homo sapiens (Human)).